The sequence spans 100 residues: Nucleoid-associated protein RoseRS_1534 (100 aa).

This sequence belongs to the YbaB/EbfC family. As to quaternary structure, homodimer.

It is found in the cytoplasm. It localises to the nucleoid. In terms of biological role, binds to DNA and alters its conformation. May be involved in regulation of gene expression, nucleoid organization and DNA protection. This chain is Nucleoid-associated protein RoseRS_1534, found in Roseiflexus sp. (strain RS-1).